The following is a 373-amino-acid chain: MALSKTYGQKPIKFQLEEDGDFYMIGSEVGNYLRMFRGSLYKRYPSLSRRLATVEERKKIVASSHDHGYTTLATSVTLLKASEVEEIFDGHDEKYKAVSISTEPPAYLREQKAKRNSQWVPTLPNSSHHLDAVPCSTTINRNRMGRDKKRTFPLCFDDHDPAVIHENASQQEVLVPIRLDMEIDGQKLRDAFTWNMNEKLMTPEMFAEILCDDLDLSPLTFVPAIASAIRQQIESYPTDSILDEQMDQRVIIKLNIHVGNISLVDQFEWDMSEKENSPEKFALKLCSELGLGGEFVTTIAYSIRGQLSWHQRTYAFSENPLPTVEIAIRNTGDADQWCPLLETLTDAEMEKKIRDQDRNTRRMRRLANTAPAW.

The segment at 1-101 (MALSKTYGQK…DEKYKAVSIS (101 aa)) is DNA-binding.

Belongs to the SNF5 family. As to quaternary structure, component of the multiprotein chromatin-remodeling complexes SWI/SNF. Component of neural progenitors-specific chromatin remodeling complex (npBAF complex) and the neuron-specific chromatin remodeling complex (nBAF complex). Component of the BAF (SWI/SNF) chromatin remodeling complex. Component of the SWI/SNF-B (PBAF) chromatin remodeling complex. Binds to double-stranded DNA.

The protein resides in the nucleus. In terms of biological role, involved in chromatin-remodeling. Core component of the BAF (SWI/SNF) complex. This ATP-dependent chromatin-remodeling complex plays important roles in cell proliferation and differentiation, in cellular antiviral activities and inhibition of tumor formation. Belongs to the neural progenitors-specific chromatin remodeling complex (npBAF complex) and the neuron-specific chromatin remodeling complex (nBAF complex) and may play a role in neural development. This Danio rerio (Zebrafish) protein is SWI/SNF-related matrix-associated actin-dependent regulator of chromatin subfamily B member 1-A (smarcb1a).